We begin with the raw amino-acid sequence, 414 residues long: MATKESKYERVEKVNVDADGATLVKNIGEDRGKEDPGMNFQDKRPANLVPGAPAGVIPNRIESLPTDRAGQRLREHLSESERLRVSRSSTSSKSSSFVEPSLKYRGEIGPIGKNGEFVASSNRQNSSSNVSSSDNSERASPASRNSNPGMNNGMTTQRTTVITESSVQGLGAQRTVPIQPHQQREDHEVITHESHARAPETTVVTIPTTRFESAQLESRRDGRTYTEDKELTIPAPVVAPQIHAHQQVNMSGGTSATIHATTDLHLASEAQINDMGPEEYERYRAKVEALARIHEDETSRKAAAYRNAVEADAELIRQTLERQHMRDIEFRKDLVESSVDRQQQEIRLEAEYAMRALEQERVNARAALDQAMASTNIDVNIDSAIGTTHSQGRVTTTSESRTSQARGPATAAVI.

Basic and acidic residues-rich tracts occupy residues 27–45 and 69–84; these read IGEDRGKEDPGMNFQDKRP and AGQRLREHLSESERLR. Residues 27 to 155 form a disordered region; that stretch reads IGEDRGKEDP…SNPGMNNGMT (129 aa). Low complexity-rich tracts occupy residues 86-101 and 120-134; these read SRSSTSSKSSSFVEPS and SSNRQNSSSNVSSSD. Positions 142–155 are enriched in polar residues; the sequence is ASRNSNPGMNNGMT. CAHS motif regions lie at residues 305-323 and 342-360; these read YRNAVEADAELIRQTLERQ and QQQEIRLEAEYAMRALEQE. Positions 341–376 form a coiled coil; the sequence is RQQQEIRLEAEYAMRALEQERVNARAALDQAMASTN. Residues 388–405 show a composition bias toward polar residues; the sequence is THSQGRVTTTSESRTSQA. The disordered stretch occupies residues 388–414; the sequence is THSQGRVTTTSESRTSQARGPATAAVI.

This sequence belongs to the Cytosolic-abundant heat soluble protein (CAHS) family.

It localises to the cytoplasm. In terms of biological role, CAHS proteins are cytosolic heat soluble proteins that seem to contribute to the anhydrobiosis in tardigrades, but their specific mechanisms are yet to be identified. It is possible that protection during anhydrobiosis might occur via the stabilization of vitrifying small molecules such as sugars, but not via the direct glass transition of CAHS proteins themselves. The sequence is that of Cytosolic-abundant heat soluble protein 89226 from Hypsibius exemplaris (Freshwater tardigrade).